We begin with the raw amino-acid sequence, 263 residues long: Small ribosomal subunit protein uS2 (263 aa).

The tract at residues 228 to 263 is disordered; that stretch reads QLEEPEADLADEDDNGMTTSDDGDAEALDIPDDSDA. The segment covering 230–263 has biased composition (acidic residues); sequence EEPEADLADEDDNGMTTSDDGDAEALDIPDDSDA.

Belongs to the universal ribosomal protein uS2 family.

The chain is Small ribosomal subunit protein uS2 from Thermosynechococcus vestitus (strain NIES-2133 / IAM M-273 / BP-1).